The sequence spans 130 residues: Small ribosomal subunit protein uS8 (130 aa).

Belongs to the universal ribosomal protein uS8 family. In terms of assembly, part of the 30S ribosomal subunit.

In terms of biological role, one of the primary rRNA binding proteins, it binds directly to 16S rRNA central domain where it helps coordinate assembly of the platform of the 30S subunit. This chain is Small ribosomal subunit protein uS8, found in Thermococcus onnurineus (strain NA1).